The chain runs to 446 residues: Na(+)-translocating NADH-quinone reductase subunit A (446 aa).

Belongs to the NqrA family. Composed of six subunits; NqrA, NqrB, NqrC, NqrD, NqrE and NqrF.

It catalyses the reaction a ubiquinone + n Na(+)(in) + NADH + H(+) = a ubiquinol + n Na(+)(out) + NAD(+). Functionally, NQR complex catalyzes the reduction of ubiquinone-1 to ubiquinol by two successive reactions, coupled with the transport of Na(+) ions from the cytoplasm to the periplasm. NqrA to NqrE are probably involved in the second step, the conversion of ubisemiquinone to ubiquinol. This chain is Na(+)-translocating NADH-quinone reductase subunit A, found in Vibrio vulnificus (strain CMCP6).